A 216-amino-acid polypeptide reads, in one-letter code: Protein Syd (216 aa).

The protein belongs to the Syd family.

It localises to the cell inner membrane. Functionally, interacts with the SecY protein in vivo. May bind preferentially to an uncomplexed state of SecY, thus functioning either as a chelating agent for excess SecY in the cell or as a regulatory factor that negatively controls the translocase function. The chain is Protein Syd from Shewanella sp. (strain W3-18-1).